The primary structure comprises 450 residues: UDP-N-acetylmuramoylalanine--D-glutamate ligase (450 aa).

119–125 (GSNGKTT) contacts ATP.

It belongs to the MurCDEF family.

It localises to the cytoplasm. It carries out the reaction UDP-N-acetyl-alpha-D-muramoyl-L-alanine + D-glutamate + ATP = UDP-N-acetyl-alpha-D-muramoyl-L-alanyl-D-glutamate + ADP + phosphate + H(+). Its pathway is cell wall biogenesis; peptidoglycan biosynthesis. Cell wall formation. Catalyzes the addition of glutamate to the nucleotide precursor UDP-N-acetylmuramoyl-L-alanine (UMA). The sequence is that of UDP-N-acetylmuramoylalanine--D-glutamate ligase from Bacillus anthracis (strain A0248).